The chain runs to 171 residues: Ribosome-binding factor A (171 aa).

Low complexity predominate over residues 120-132 (AALAAAAQPAGDP). Positions 120 to 171 (AALAAAAQPAGDPDPYKKPVDHTDDWDEDDEDDRDGDDAVDALDAAADVPRL) are disordered. Over residues 133 to 142 (DPYKKPVDHT) the composition is skewed to basic and acidic residues. Positions 143 to 160 (DDWDEDDEDDRDGDDAVD) are enriched in acidic residues. Over residues 161 to 171 (ALDAAADVPRL) the composition is skewed to low complexity.

This sequence belongs to the RbfA family. Monomer. Binds 30S ribosomal subunits, but not 50S ribosomal subunits or 70S ribosomes.

The protein resides in the cytoplasm. Its function is as follows. One of several proteins that assist in the late maturation steps of the functional core of the 30S ribosomal subunit. Associates with free 30S ribosomal subunits (but not with 30S subunits that are part of 70S ribosomes or polysomes). Required for efficient processing of 16S rRNA. May interact with the 5'-terminal helix region of 16S rRNA. The protein is Ribosome-binding factor A of Kineococcus radiotolerans (strain ATCC BAA-149 / DSM 14245 / SRS30216).